Reading from the N-terminus, the 120-residue chain is Large ribosomal subunit protein bL17 (120 aa).

This sequence belongs to the bacterial ribosomal protein bL17 family. Part of the 50S ribosomal subunit. Contacts protein L32.

The sequence is that of Large ribosomal subunit protein bL17 from Mesomycoplasma hyopneumoniae (strain J / ATCC 25934 / NCTC 10110) (Mycoplasma hyopneumoniae).